The chain runs to 98 residues: Integration host factor subunit beta (98 aa).

It belongs to the bacterial histone-like protein family. Heterodimer of an alpha and a beta chain.

In terms of biological role, this protein is one of the two subunits of integration host factor, a specific DNA-binding protein that functions in genetic recombination as well as in transcriptional and translational control. This Pseudomonas putida (strain GB-1) protein is Integration host factor subunit beta.